The sequence spans 327 residues: Malate dehydrogenase (327 aa).

12-18 contacts NAD(+); the sequence is GAAGQIA. 2 residues coordinate substrate: Arg93 and Arg99. Residues Asn106, Gln113, and 130-132 each bind NAD(+); that span reads VGN. Positions 132 and 163 each coordinate substrate. His188 serves as the catalytic Proton acceptor.

The protein belongs to the LDH/MDH superfamily. MDH type 2 family.

The catalysed reaction is (S)-malate + NAD(+) = oxaloacetate + NADH + H(+). Functionally, catalyzes the reversible oxidation of malate to oxaloacetate. The protein is Malate dehydrogenase of Paraburkholderia phytofirmans (strain DSM 17436 / LMG 22146 / PsJN) (Burkholderia phytofirmans).